The sequence spans 448 residues: Na(+)-translocating NADH-quinone reductase subunit A (448 aa).

This sequence belongs to the NqrA family. Composed of six subunits; NqrA, NqrB, NqrC, NqrD, NqrE and NqrF.

It catalyses the reaction a ubiquinone + n Na(+)(in) + NADH + H(+) = a ubiquinol + n Na(+)(out) + NAD(+). In terms of biological role, NQR complex catalyzes the reduction of ubiquinone-1 to ubiquinol by two successive reactions, coupled with the transport of Na(+) ions from the cytoplasm to the periplasm. NqrA to NqrE are probably involved in the second step, the conversion of ubisemiquinone to ubiquinol. In Glaesserella parasuis serovar 5 (strain SH0165) (Haemophilus parasuis), this protein is Na(+)-translocating NADH-quinone reductase subunit A.